A 446-amino-acid polypeptide reads, in one-letter code: C-type lectin domain family 18 member C (446 aa).

The first 26 residues, 1-26 (MLHPETSPGRGHLLAVLLALLGTAWA), serve as a signal peptide directing secretion. One can recognise an SCP domain in the interval 52–182 (LSLHNRLRSW…AAIEAFVCAY (131 aa)). Asparagine 144 is a glycosylation site (N-linked (GlcNAc...) asparagine). The EGF-like domain maps to 228–261 (PRNPCRMSCQNHGRLNISTCHCHCPPGYTGRYCQ). 4 disulfide bridges follow: cysteine 236–cysteine 249, cysteine 251–cysteine 260, cysteine 327–cysteine 432, and cysteine 408–cysteine 424. A C-type lectin domain is found at 306-433 (IDGDCFMVSS…CKTRNRYICQ (128 aa)).

In terms of tissue distribution, detected in peripheral blood cells.

The protein resides in the secreted. It localises to the endoplasmic reticulum. The protein localises to the golgi apparatus. Its subcellular location is the endosome. Functionally, binds polysaccharidesin a Ca(2+)-independent manner with a preferentially binding to fucoidan, beta-glucans and galactans. In Homo sapiens (Human), this protein is C-type lectin domain family 18 member C (CLEC18C).